Here is a 201-residue protein sequence, read N- to C-terminus: ATP-dependent Clp protease proteolytic subunit (201 aa).

Ser-100 acts as the Nucleophile in catalysis. His-125 is an active-site residue.

This sequence belongs to the peptidase S14 family. Component of the chloroplastic Clp protease core complex.

The protein localises to the plastid. It is found in the chloroplast stroma. It catalyses the reaction Hydrolysis of proteins to small peptides in the presence of ATP and magnesium. alpha-casein is the usual test substrate. In the absence of ATP, only oligopeptides shorter than five residues are hydrolyzed (such as succinyl-Leu-Tyr-|-NHMec, and Leu-Tyr-Leu-|-Tyr-Trp, in which cleavage of the -Tyr-|-Leu- and -Tyr-|-Trp bonds also occurs).. Cleaves peptides in various proteins in a process that requires ATP hydrolysis. Has a chymotrypsin-like activity. Plays a major role in the degradation of misfolded proteins. The chain is ATP-dependent Clp protease proteolytic subunit from Chloranthus spicatus (Chulantree).